Reading from the N-terminus, the 299-residue chain is Non-structural protein V (299 aa).

The tract at residues 40–91 is disordered; the sequence is SDNPGQERATYKEEKAGGSGLSKPCLSAIGSTEGGAPRIRGQGSGESDDDTE. Residues 110–120 are interaction with host STAT1; sequence HYVYDHSGEAV. The segment at 133-163 is disordered; sequence SGLDGDSTLSEGDNESENSDVDIGEPDTEGY. Residues 144–160 are compositionally biased toward acidic residues; the sequence is GDNESENSDVDIGEPDT. The Zn(2+) site is built by His232, Cys251, Cys255, Cys267, Cys269, Cys272, Cys276, and Cys279.

This sequence belongs to the paramyxoviruses V protein family. In terms of assembly, interacts with host IFIH1/MDA5 and DHX58/LGP2; these interactions are involved in the inhibition of the host type I interferon signaling pathway. Interacts with host TYK2; this interaction inhibits the type I interferon signaling pathway without affecting the type II pathway. Interacts with host IRF7; this interaction inhibits IRF7 translocation to the nucleus. Interacts with host CHUK. Interacts with host RELA/p65; this interaction inhibits the nuclear translocation of NF-KappaB. Interacts (via N-terminus) with host STAT1 and JAK1; these interactions inhibit STAT1 phosphorylation by Jak1 and thereby the type I interferon signaling pathway. Interacts (via C-terminus) with host STAT2; this interaction is involved in the inhibition of the host type I interferon signaling pathway. Forms a complex with host PPP1CA and PPP1CC; this interaction prevents dephosphorylation of host IFIH1/MDA5 and leads to the inhibition of the host type I interferon signaling pathway. Interacts with host IRF9; this interaction prevents the binding of IRF9 to STAT2 and thereby the type I interferon signaling pathway. Interacts with host RIGI regulatory protein (via CARDs domain) and host TRIM25 (via SPRY domain); these interactions prevent TRIM25-mediated ubiquitination of RIG-I and disrupts downstream RIG-I signaling.

The protein resides in the host cytoplasm. Functionally, plays an essential role in the inhibition of host immune response. Prevents the establishment of cellular antiviral state by blocking interferon-alpha/beta (IFN-alpha/beta) production and signaling pathway. Interacts with host IFIH1/MDA5 and DHX58/LGP2 to inhibit the transduction pathway involved in the activation of IFN-beta promoter, thus protecting the virus against cell antiviral state. Blocks the type I interferon signaling pathway by interacting with host TYK2 and thereby inhibiting downstream STAT1 and STAT2 phosphorylation. Blocks the type I interferon signaling pathway by disrupting the RIG-I signaling pathway. Moderately affects the type II interferon signaling. Prevents PP1alpha/gamma-mediated dephosphorylation of host IFIH1/MDA5 and thus blocks its activation. The protein is Non-structural protein V (P/V) of Homo sapiens (Human).